Consider the following 338-residue polypeptide: N-acetyl-gamma-glutamyl-phosphate reductase (338 aa).

Residue Cys-148 is part of the active site.

Belongs to the NAGSA dehydrogenase family. Type 1 subfamily.

It localises to the cytoplasm. The catalysed reaction is N-acetyl-L-glutamate 5-semialdehyde + phosphate + NADP(+) = N-acetyl-L-glutamyl 5-phosphate + NADPH + H(+). It functions in the pathway amino-acid biosynthesis; L-arginine biosynthesis; N(2)-acetyl-L-ornithine from L-glutamate: step 3/4. Catalyzes the NADPH-dependent reduction of N-acetyl-5-glutamyl phosphate to yield N-acetyl-L-glutamate 5-semialdehyde. The sequence is that of N-acetyl-gamma-glutamyl-phosphate reductase from Leptospira interrogans serogroup Icterohaemorrhagiae serovar Lai (strain 56601).